Reading from the N-terminus, the 160-residue chain is MSGGAGIPDVPAFDASGVRLAIVASTWHTKICDALLAGARNTAADSGIDNPTVVRVLGAIEIPVVAQELTRNHDAVVALGVVIRGETPHFDYVCDVVTQGLTRVSLDSSTPVANGVLTTNSEEQALNRAGLPTSDEDKGAQATAAALTTALTLRELRAES.

5-amino-6-(D-ribitylamino)uracil is bound by residues tryptophan 27, 59–61 (AIE), and 81–83 (VVI). 86–87 (ET) lines the (2S)-2-hydroxy-3-oxobutyl phosphate pocket. Catalysis depends on histidine 89, which acts as the Proton donor. Asparagine 114 is a 5-amino-6-(D-ribitylamino)uracil binding site. A (2S)-2-hydroxy-3-oxobutyl phosphate-binding site is contributed by arginine 128.

It belongs to the DMRL synthase family. As to quaternary structure, homopentamer.

The enzyme catalyses (2S)-2-hydroxy-3-oxobutyl phosphate + 5-amino-6-(D-ribitylamino)uracil = 6,7-dimethyl-8-(1-D-ribityl)lumazine + phosphate + 2 H2O + H(+). The protein operates within cofactor biosynthesis; riboflavin biosynthesis; riboflavin from 2-hydroxy-3-oxobutyl phosphate and 5-amino-6-(D-ribitylamino)uracil: step 1/2. Its function is as follows. Catalyzes the formation of 6,7-dimethyl-8-ribityllumazine by condensation of 5-amino-6-(D-ribitylamino)uracil with 3,4-dihydroxy-2-butanone 4-phosphate. This is the penultimate step in the biosynthesis of riboflavin. This Mycobacterium ulcerans (strain Agy99) protein is 6,7-dimethyl-8-ribityllumazine synthase.